A 112-amino-acid polypeptide reads, in one-letter code: Small ribosomal subunit protein uS17 (112 aa).

Belongs to the universal ribosomal protein uS17 family. As to quaternary structure, part of the 30S ribosomal subunit.

In terms of biological role, one of the primary rRNA binding proteins, it binds specifically to the 5'-end of 16S ribosomal RNA. The polypeptide is Small ribosomal subunit protein uS17 (Haloarcula marismortui (strain ATCC 43049 / DSM 3752 / JCM 8966 / VKM B-1809) (Halobacterium marismortui)).